Here is a 260-residue protein sequence, read N- to C-terminus: 1-(5-phosphoribosyl)-5-[(5-phosphoribosylamino)methylideneamino] imidazole-4-carboxamide isomerase (260 aa).

The active-site Proton acceptor is D8. The active-site Proton donor is the D130.

This sequence belongs to the HisA/HisF family.

Its subcellular location is the cytoplasm. The catalysed reaction is 1-(5-phospho-beta-D-ribosyl)-5-[(5-phospho-beta-D-ribosylamino)methylideneamino]imidazole-4-carboxamide = 5-[(5-phospho-1-deoxy-D-ribulos-1-ylimino)methylamino]-1-(5-phospho-beta-D-ribosyl)imidazole-4-carboxamide. It participates in amino-acid biosynthesis; L-histidine biosynthesis; L-histidine from 5-phospho-alpha-D-ribose 1-diphosphate: step 4/9. This chain is 1-(5-phosphoribosyl)-5-[(5-phosphoribosylamino)methylideneamino] imidazole-4-carboxamide isomerase, found in Chlorobium phaeobacteroides (strain BS1).